A 119-amino-acid chain; its full sequence is uncharacterized protein (119 aa).

A disulfide bond links Cys-9 and Cys-12.

Belongs to the ArsC family.

This is an uncharacterized protein from Streptomyces viridochromogenes.